The chain runs to 127 residues: MADDTTWGIANVYASFNNTIITVTDMTGAETIVKSSGGTVVKQNRDEASPYAAMQMAEVVAEDVKDAGIDGVHVRVRGPGGNQQQNPGPGAQATIRALARAGLEIGRIEDVTPIPHDGTRGPKNAGF.

It belongs to the universal ribosomal protein uS11 family. In terms of assembly, part of the 30S ribosomal subunit.

Located on the platform of the 30S subunit. This Natronomonas pharaonis (strain ATCC 35678 / DSM 2160 / CIP 103997 / JCM 8858 / NBRC 14720 / NCIMB 2260 / Gabara) (Halobacterium pharaonis) protein is Small ribosomal subunit protein uS11.